The chain runs to 910 residues: Bifunctional glucose-6-phosphate 1-dehydrogenase/6-phosphogluconolactonase (910 aa).

A 6-phosphogluconolactonase region spans residues 1–170 (MDYENFVKSA…DFHIASLFPN (170 aa)). The interval 171–276 (IFYNIYMNNY…PATYLIDTSC (106 aa)) is linker. Residues 277–910 (TNENVNINNN…FYEDDLLDIN (634 aa)) are glucose-6-phosphate 1-dehydrogenase. NADP(+) is bound by residues 345-352 (GCSGDLAK), Arg379, and Lys548. Residues Lys548, 578–582 (HYLGK), Glu616, and Asp635 each bind D-glucose 6-phosphate. The active-site Proton acceptor is the His640. Residues 689-711 (ENFKEDENNDDESKKNHSYHDDP) are disordered. Lys742 contributes to the NADP(+) binding site. Lys745 contacts D-glucose 6-phosphate. Arg755 provides a ligand contact to NADP(+). Gln779 lines the D-glucose 6-phosphate pocket. Residue 785–787 (YLK) participates in NADP(+) binding.

In the N-terminal section; belongs to the glucosamine/galactosamine-6-phosphate isomerase family. 6-phosphogluconolactonase subfamily. This sequence in the C-terminal section; belongs to the glucose-6-phosphate dehydrogenase family. As to quaternary structure, homotetramer.

The enzyme catalyses 6-phospho-D-glucono-1,5-lactone + H2O = 6-phospho-D-gluconate + H(+). It catalyses the reaction D-glucose 6-phosphate + NADP(+) = 6-phospho-D-glucono-1,5-lactone + NADPH + H(+). Its pathway is carbohydrate degradation; pentose phosphate pathway; D-ribulose 5-phosphate from D-glucose 6-phosphate (oxidative stage): step 1/3. It functions in the pathway carbohydrate degradation; pentose phosphate pathway; D-ribulose 5-phosphate from D-glucose 6-phosphate (oxidative stage): step 2/3. Its activity is regulated as follows. G6PD activity is inhibited by glucosamine-6-phosphate, NADPH, and 4-(4-bromophenyl)-7-(3,4-dimethoxyphenyl)-4,6,7,8-tetrahydroquinoline-2,5(1 H,3H)-dione. G6PD and 6PGL activities can be reversibly inhibited by S-glutathionylation (in vitro). Functionally, bifunctional enzyme which catalyzes the first two steps of the oxidative pentose-phosphate pathway, which represents a route for the dissimilation of carbohydrates besides glycolysis. The main function of this enzyme is to provide reducing power (NADPH) and pentose phosphates for fatty acid and nucleic acid synthesis. This chain is Bifunctional glucose-6-phosphate 1-dehydrogenase/6-phosphogluconolactonase, found in Plasmodium falciparum (isolate 3D7).